The following is a 246-amino-acid chain: Orotidine 5'-phosphate decarboxylase (246 aa).

Substrate is bound by residues aspartate 18, lysine 39, 66–75 (DLKFHDIPAT), threonine 130, arginine 192, glutamine 201, glycine 221, and arginine 222. The active-site Proton donor is the lysine 68.

This sequence belongs to the OMP decarboxylase family. Type 1 subfamily. Homodimer.

The enzyme catalyses orotidine 5'-phosphate + H(+) = UMP + CO2. It functions in the pathway pyrimidine metabolism; UMP biosynthesis via de novo pathway; UMP from orotate: step 2/2. Catalyzes the decarboxylation of orotidine 5'-monophosphate (OMP) to uridine 5'-monophosphate (UMP). The sequence is that of Orotidine 5'-phosphate decarboxylase from Parasynechococcus marenigrum (strain WH8102).